Reading from the N-terminus, the 342-residue chain is Holliday junction branch migration complex subunit RuvB (342 aa).

Residues methionine 1–tyrosine 184 form a large ATPase domain (RuvB-L) region. Residues isoleucine 23, arginine 24, glycine 65, lysine 68, threonine 69, threonine 70, glutamate 131–tyrosine 133, arginine 174, tyrosine 184, and arginine 221 contribute to the ATP site. Position 69 (threonine 69) interacts with Mg(2+). Residues serine 185–glutamate 255 form a small ATPAse domain (RuvB-S) region. A head domain (RuvB-H) region spans residues serine 258–aspartate 342. Residues arginine 313 and arginine 318 each coordinate DNA.

Belongs to the RuvB family. As to quaternary structure, homohexamer. Forms an RuvA(8)-RuvB(12)-Holliday junction (HJ) complex. HJ DNA is sandwiched between 2 RuvA tetramers; dsDNA enters through RuvA and exits via RuvB. An RuvB hexamer assembles on each DNA strand where it exits the tetramer. Each RuvB hexamer is contacted by two RuvA subunits (via domain III) on 2 adjacent RuvB subunits; this complex drives branch migration. In the full resolvosome a probable DNA-RuvA(4)-RuvB(12)-RuvC(2) complex forms which resolves the HJ.

It is found in the cytoplasm. The catalysed reaction is ATP + H2O = ADP + phosphate + H(+). Functionally, the RuvA-RuvB-RuvC complex processes Holliday junction (HJ) DNA during genetic recombination and DNA repair, while the RuvA-RuvB complex plays an important role in the rescue of blocked DNA replication forks via replication fork reversal (RFR). RuvA specifically binds to HJ cruciform DNA, conferring on it an open structure. The RuvB hexamer acts as an ATP-dependent pump, pulling dsDNA into and through the RuvAB complex. RuvB forms 2 homohexamers on either side of HJ DNA bound by 1 or 2 RuvA tetramers; 4 subunits per hexamer contact DNA at a time. Coordinated motions by a converter formed by DNA-disengaged RuvB subunits stimulates ATP hydrolysis and nucleotide exchange. Immobilization of the converter enables RuvB to convert the ATP-contained energy into a lever motion, pulling 2 nucleotides of DNA out of the RuvA tetramer per ATP hydrolyzed, thus driving DNA branch migration. The RuvB motors rotate together with the DNA substrate, which together with the progressing nucleotide cycle form the mechanistic basis for DNA recombination by continuous HJ branch migration. Branch migration allows RuvC to scan DNA until it finds its consensus sequence, where it cleaves and resolves cruciform DNA. The protein is Holliday junction branch migration complex subunit RuvB of Alcanivorax borkumensis (strain ATCC 700651 / DSM 11573 / NCIMB 13689 / SK2).